The sequence spans 312 residues: Metaxin-1 homolog (312 aa).

The chain crosses the membrane as a helical span at residues 282–302; that stretch reads ILFTIGALVLSVAFAIHTGLI.

The protein belongs to the metaxin family. In terms of assembly, associates with the mitochondrial contact site and cristae organizing system (MICOS) complex (also known as MINOS or MitOS complex).

Its subcellular location is the mitochondrion outer membrane. Its function is as follows. Involved in transport of proteins into the mitochondrion. Essential for embryonic development. This chain is Metaxin-1 homolog, found in Caenorhabditis briggsae.